The chain runs to 432 residues: Trigger factor (432 aa).

A PPIase FKBP-type domain is found at 161-246 (EDRVTIDFTG…LKKVEERELP (86 aa)).

It belongs to the FKBP-type PPIase family. Tig subfamily. As to quaternary structure, homodimer and monomer. In vivo most of the ribosomes are in complex with monomeric TF. Uncomplexed TF, however, is in a monomer-dimer equilibrium with approximately two thirds of TF existing in a dimeric state.

It is found in the cytoplasm. It carries out the reaction [protein]-peptidylproline (omega=180) = [protein]-peptidylproline (omega=0). Functionally, involved in protein export. Acts as a chaperone by maintaining the newly synthesized protein in an open conformation. Functions as a peptidyl-prolyl cis-trans isomerase. The polypeptide is Trigger factor (Escherichia coli O139:H28 (strain E24377A / ETEC)).